The sequence spans 121 residues: MSKFTSRELRARRHRRLRGQLSGTPERPRLNVFRSGLNIYAQVIDDLAGHTLVSASTIDTELRGSLGEQRKLEQAHSVGKAVAERARAAGITKVVFDRGGYKYHGRVKAVAEGAREGGLEF.

This sequence belongs to the universal ribosomal protein uL18 family. As to quaternary structure, part of the 50S ribosomal subunit; part of the 5S rRNA/L5/L18/L25 subcomplex. Contacts the 5S and 23S rRNAs.

In terms of biological role, this is one of the proteins that bind and probably mediate the attachment of the 5S RNA into the large ribosomal subunit, where it forms part of the central protuberance. The sequence is that of Large ribosomal subunit protein uL18 from Herpetosiphon aurantiacus (strain ATCC 23779 / DSM 785 / 114-95).